A 180-amino-acid chain; its full sequence is Translation initiation factor IF-3 (180 aa).

The protein belongs to the IF-3 family. As to quaternary structure, monomer.

It is found in the cytoplasm. In terms of biological role, IF-3 binds to the 30S ribosomal subunit and shifts the equilibrium between 70S ribosomes and their 50S and 30S subunits in favor of the free subunits, thus enhancing the availability of 30S subunits on which protein synthesis initiation begins. This chain is Translation initiation factor IF-3, found in Shewanella baltica (strain OS223).